Here is a 929-residue protein sequence, read N- to C-terminus: Isoleucine--tRNA ligase (929 aa).

Positions 58-68 (PYANGDIHIGH) match the 'HIGH' region motif. E563 provides a ligand contact to L-isoleucyl-5'-AMP. Positions 605-609 (KMSKS) match the 'KMSKS' region motif. K608 provides a ligand contact to ATP. C892, C895, C912, and C915 together coordinate Zn(2+).

It belongs to the class-I aminoacyl-tRNA synthetase family. IleS type 1 subfamily. Monomer. It depends on Zn(2+) as a cofactor.

The protein resides in the cytoplasm. It catalyses the reaction tRNA(Ile) + L-isoleucine + ATP = L-isoleucyl-tRNA(Ile) + AMP + diphosphate. Catalyzes the attachment of isoleucine to tRNA(Ile). As IleRS can inadvertently accommodate and process structurally similar amino acids such as valine, to avoid such errors it has two additional distinct tRNA(Ile)-dependent editing activities. One activity is designated as 'pretransfer' editing and involves the hydrolysis of activated Val-AMP. The other activity is designated 'posttransfer' editing and involves deacylation of mischarged Val-tRNA(Ile). This chain is Isoleucine--tRNA ligase, found in Neisseria meningitidis serogroup A / serotype 4A (strain DSM 15465 / Z2491).